A 452-amino-acid polypeptide reads, in one-letter code: Na(+)/H(+) antiporter NhaA (452 aa).

The next 11 membrane-spanning stretches (helical) occupy residues 27-47 (FLHIEAMSGVVLLLAAATALI), 78-98 (LHFWVNDVLMTIFFLVAGMEI), 114-134 (ILPIVAAIGGVCIPAIIYLSF), 141-161 (IYGWAVPTATDIAFALGILAL), 172-192 (IILLSLAIIDDIMAVLIIAFF), 201-221 (GLAIAAAGIALVFFFQWISFA), 222-242 (SAWLYVLPGAIIWWGLMVTGI), 316-336 (PWVAYGVMPIFAFANAGVSFA), 346-366 (FLIVLGIIIGLCIGKPLGILA), 388-408 (ILLIGFLAGIGFTMSIFVSML), and 421-441 (IGVLCGSGLSALAGLGYGLIY).

It belongs to the NhaA Na(+)/H(+) (TC 2.A.33) antiporter family.

Its subcellular location is the cell inner membrane. The catalysed reaction is Na(+)(in) + 2 H(+)(out) = Na(+)(out) + 2 H(+)(in). Na(+)/H(+) antiporter that extrudes sodium in exchange for external protons. The chain is Na(+)/H(+) antiporter NhaA from Bartonella bacilliformis (strain ATCC 35685 / KC583 / Herrer 020/F12,63).